The following is a 187-amino-acid chain: UPF0200 protein MM_1313 (187 aa).

9–16 (GMPASGKS) is a binding site for ATP.

The protein belongs to the UPF0200 family.

The polypeptide is UPF0200 protein MM_1313 (Methanosarcina mazei (strain ATCC BAA-159 / DSM 3647 / Goe1 / Go1 / JCM 11833 / OCM 88) (Methanosarcina frisia)).